The sequence spans 395 residues: Capsid protein (395 aa).

Positions 1–41 (MARKYAKRSKSRPRTARRSPKSRSRPRSRAPRRKAPSRPRI) are enriched in basic residues. Residues 1-51 (MARKYAKRSKSRPRTARRSPKSRSRPRSRAPRRKAPSRPRIQRVNPVRRPM) form a disordered region. The Nuclear localization signal signature appears at 2-9 (ARKYAKRS).

The protein resides in the host nucleus. Its subcellular location is the virion. Functionally, self-assembles to form the virion icosahedral capsid. In Chaetoceros setoense (Chaetoceros setoense DNA virus), this protein is Capsid protein.